Consider the following 271-residue polypeptide: Phosphate import ATP-binding protein PstB 1 (271 aa).

An ABC transporter domain is found at Leu-25–Ile-266. Gly-57–Ser-64 is a binding site for ATP.

This sequence belongs to the ABC transporter superfamily. Phosphate importer (TC 3.A.1.7) family. The complex is composed of two ATP-binding proteins (PstB), two transmembrane proteins (PstC and PstA) and a solute-binding protein (PstS).

The protein resides in the cell inner membrane. It catalyses the reaction phosphate(out) + ATP + H2O = ADP + 2 phosphate(in) + H(+). In terms of biological role, part of the ABC transporter complex PstSACB involved in phosphate import. Responsible for energy coupling to the transport system. This Pectobacterium atrosepticum (strain SCRI 1043 / ATCC BAA-672) (Erwinia carotovora subsp. atroseptica) protein is Phosphate import ATP-binding protein PstB 1.